Here is a 44-residue protein sequence, read N- to C-terminus: Small ribosomal subunit protein eS31 (44 aa).

Residues cysteine 18, cysteine 21, cysteine 35, and cysteine 38 each coordinate Zn(2+). The C4-type zinc-finger motif lies at 18 to 38 (CPRCGDTFLAAHDDRQVCGRC).

The protein belongs to the eukaryotic ribosomal protein eS31 family. Part of the 30S ribosomal subunit. Zn(2+) is required as a cofactor.

The sequence is that of Small ribosomal subunit protein eS31 from Halobacterium salinarum (strain ATCC 29341 / DSM 671 / R1).